The sequence spans 524 residues: Homeobox protein engrailed-like SMOX-2 (524 aa).

The interval 194-218 is disordered; it reads SSSSSSSSSSSSSSSSSSCSTNSSS. Positions 423 to 482 form a DNA-binding region, homeobox; sequence LKRPRTSFTVPQLKRLSQEFEKNRYLDELRRKKLATELDLRESQVKIWFQNKRAKTKKAS.

The protein belongs to the engrailed homeobox family.

It localises to the nucleus. The chain is Homeobox protein engrailed-like SMOX-2 (SMOX-2) from Schistosoma mansoni (Blood fluke).